The primary structure comprises 176 residues: RNA pyrophosphohydrolase (176 aa).

The Nudix hydrolase domain occupies Gly-6–Lys-149. Residues Gly-38–Gly-59 carry the Nudix box motif.

This sequence belongs to the Nudix hydrolase family. RppH subfamily. The cofactor is a divalent metal cation.

Its function is as follows. Accelerates the degradation of transcripts by removing pyrophosphate from the 5'-end of triphosphorylated RNA, leading to a more labile monophosphorylated state that can stimulate subsequent ribonuclease cleavage. In Escherichia fergusonii (strain ATCC 35469 / DSM 13698 / CCUG 18766 / IAM 14443 / JCM 21226 / LMG 7866 / NBRC 102419 / NCTC 12128 / CDC 0568-73), this protein is RNA pyrophosphohydrolase.